The sequence spans 469 residues: Interstitial collagenase (469 aa).

A signal peptide spans 1–18; the sequence is MPRLPLLLLLLWGTGSHG. The propeptide at 19 to 99 is activation peptide; the sequence is FPAATSETQE…PRCGVPDVAP (81 aa). A Cysteine switch motif is present at residues 90–97; the sequence is PRCGVPDV. C92 lines the Zn(2+) pocket. N120 is a glycosylation site (N-linked (GlcNAc...) asparagine). Positions 124 and 158 each coordinate Ca(2+). Positions 168 and 170 each coordinate Zn(2+). Residues D175, G176, G178, and N180 each coordinate Ca(2+). A Zn(2+)-binding site is contributed by H183. G190, G192, and D194 together coordinate Ca(2+). H196 lines the Zn(2+) pocket. The Ca(2+) site is built by D198, D199, and E201. H218 contributes to the Zn(2+) binding site. The active site involves E219. Residues H222 and H228 each coordinate Zn(2+). Residue T274 is modified to Phosphothreonine. Hemopexin repeat units lie at residues 275–324, 325–371, 374–422, and 423–466; these read PEVC…WPQL, PNGL…FGFP, VKSI…FPGI, and GNKV…WFNC. Cysteines 278 and 466 form a disulfide. Ca(2+)-binding residues include D285 and Q329. A Phosphotyrosine; by PKDCC modification is found at Y360. The Ca(2+) site is built by D378 and D427.

This sequence belongs to the peptidase M10A family. Ca(2+) is required as a cofactor. Requires Zn(2+) as cofactor. Post-translationally, tyrosine phosphorylated in platelets by PKDCC/VLK.

The protein resides in the secreted. It localises to the extracellular space. Its subcellular location is the extracellular matrix. It catalyses the reaction Cleavage of the triple helix of collagen at about three-quarters of the length of the molecule from the N-terminus, at 775-Gly-|-Ile-776 in the alpha1(I) chain. Cleaves synthetic substrates and alpha-macroglobulins at bonds where P1' is a hydrophobic residue.. With respect to regulation, can be activated without removal of the activation peptide. Functionally, cleaves collagens of types I, II, and III at one site in the helical domain. Also cleaves collagens of types VII and X. In Bos taurus (Bovine), this protein is Interstitial collagenase (MMP1).